We begin with the raw amino-acid sequence, 385 residues long: Probable caffeine synthase 4 (385 aa).

Residues Tyr18, Cys62, Asn67, Asp101, Leu102, Ser140, and Phe141 each coordinate S-adenosyl-L-homocysteine. Caffeine-binding residues include Tyr158, Gln161, and Phe162. Residue Asn179 participates in Mg(2+) binding. Thr238 contributes to the caffeine binding site. Mg(2+) is bound by residues Asp261, Phe263, and Asn264. Tyr369 is a caffeine binding site.

Belongs to the methyltransferase superfamily. Type-7 methyltransferase family. The cofactor is Mg(2+). In terms of tissue distribution, expressed in roots, stems, young and old leaves.

It participates in alkaloid biosynthesis. Functionally, may be involved in the biosynthesis of caffeine. In Coffea arabica (Arabian coffee), this protein is Probable caffeine synthase 4.